Here is a 334-residue protein sequence, read N- to C-terminus: ATP-dependent kinase YFH7 (334 aa).

30 to 38 contributes to the ATP binding site; that stretch reads GHPGSGKST.

It belongs to the YFH7 family.

In terms of biological role, ATP-dependent kinase that could be involved in endoplasmic reticulum membrane assembly. The protein is ATP-dependent kinase YFH7 (YFH7) of Eremothecium gossypii (strain ATCC 10895 / CBS 109.51 / FGSC 9923 / NRRL Y-1056) (Yeast).